The following is a 205-amino-acid chain: Recombination protein RecR (205 aa).

Residues 64–79 (CSRCYFITQGDLCAIC) form a C4-type zinc finger. The 96-residue stretch at 87–182 (RVICVVEEPL…RVTRLARGLP (96 aa)) folds into the Toprim domain.

The protein belongs to the RecR family.

In terms of biological role, may play a role in DNA repair. It seems to be involved in an RecBC-independent recombinational process of DNA repair. It may act with RecF and RecO. The chain is Recombination protein RecR from Roseiflexus sp. (strain RS-1).